A 488-amino-acid chain; its full sequence is ATP synthase subunit beta, chloroplastic (488 aa).

170–177 contacts ATP; the sequence is GGAGVGKT.

Belongs to the ATPase alpha/beta chains family. F-type ATPases have 2 components, CF(1) - the catalytic core - and CF(0) - the membrane proton channel. CF(1) has five subunits: alpha(3), beta(3), gamma(1), delta(1), epsilon(1). CF(0) has four main subunits: a(1), b(1), b'(1) and c(9-12).

Its subcellular location is the plastid. The protein localises to the chloroplast thylakoid membrane. The catalysed reaction is ATP + H2O + 4 H(+)(in) = ADP + phosphate + 5 H(+)(out). Produces ATP from ADP in the presence of a proton gradient across the membrane. The catalytic sites are hosted primarily by the beta subunits. In Picea abies (Norway spruce), this protein is ATP synthase subunit beta, chloroplastic.